A 513-amino-acid polypeptide reads, in one-letter code: MATAPATEKKAPAKKAAAPKAAAPKKAAAPKAAAPVGAATGRIAQVIGAVVDVQFTGELPAILNALETDNNGNRLVLEVAQHLGENTVRTIAMDATDGLTRGQPVRDTGAQISVPVGPQTLGRILNVIGEPIDERGPVNSDMTAPIHAKAPEFVDQSTEASILVTGIKVIDLIAPYAKGGKIGLFGGAGVGKTVLIQELINNIAKGHGGVSVFAGVGERTREGNDLYHEFLDAGVIAKDADGNPTPDGSKVALVFGQMNEPPGARARVALSGLTMAEYFRDQEGQDVLFFVDNIFRFTQAGSEVSALLGRIPSAVGYQPTLSTDMGALQERITSTTKGSITSVQAIYVPADDLTDPAPATSFAHLDATTTLSRAISELGIYPAVDPLDSTSRVLTPAIVGQEHYETARRVQETLQKYKSLQDIIAILGMDELSEEDKLVVARARKIQRFLSQPFHVAEVFTGIPGKFVPIEETVKSFKAVVDGEYDHLPEAAFYMVGGIDEAVAKAAKLAEEA.

Positions 1–29 (MATAPATEKKAPAKKAAAPKAAAPKKAAA) are disordered. A compositionally biased stretch (low complexity) spans 14–29 (KKAAAPKAAAPKKAAA). 186 to 193 (GGAGVGKT) provides a ligand contact to ATP.

Belongs to the ATPase alpha/beta chains family. F-type ATPases have 2 components, CF(1) - the catalytic core - and CF(0) - the membrane proton channel. CF(1) has five subunits: alpha(3), beta(3), gamma(1), delta(1), epsilon(1). CF(0) has three main subunits: a(1), b(2) and c(9-12). The alpha and beta chains form an alternating ring which encloses part of the gamma chain. CF(1) is attached to CF(0) by a central stalk formed by the gamma and epsilon chains, while a peripheral stalk is formed by the delta and b chains.

The protein resides in the cell inner membrane. The catalysed reaction is ATP + H2O + 4 H(+)(in) = ADP + phosphate + 5 H(+)(out). In terms of biological role, produces ATP from ADP in the presence of a proton gradient across the membrane. The catalytic sites are hosted primarily by the beta subunits. This chain is ATP synthase subunit beta, found in Sphingopyxis alaskensis (strain DSM 13593 / LMG 18877 / RB2256) (Sphingomonas alaskensis).